A 495-amino-acid polypeptide reads, in one-letter code: Telomere-binding protein subunit alpha (495 aa).

A compositionally biased stretch (polar residues) spans 1 to 13; it reads MSTAAKQNRSTSR. The segment at 1–31 is disordered; the sequence is MSTAAKQNRSTSRVSKKKTAAPKEGAAKKSD.

It belongs to the telombin family. In terms of assembly, heterodimer of an alpha and a beta subunit.

It localises to the nucleus. Its subcellular location is the chromosome. The protein localises to the telomere. Its function is as follows. May function as protective capping of the single-stranded telomeric overhang. May also participate in telomere length regulation during DNA replication. Binds specifically to the T4G4-containing extension on the 3'strand and protects this region of the telomere from nuclease digestion and chemical modification. The polypeptide is Telomere-binding protein subunit alpha (MAC-56A) (Sterkiella nova (Ciliate)).